The primary structure comprises 367 residues: Probable neutral protease 2 homolog MCYG_00239 (367 aa).

The signal sequence occupies residues 1-19 (MQVLVALAALSSLAAPVVG). A propeptide spanning residues 20–190 (FSIPRGVPVS…DGPFTRIDKR (171 aa)) is cleaved from the precursor. 3 disulfides stabilise this stretch: Cys-198/Cys-268, Cys-275/Cys-293, and Cys-307/Cys-367. Zn(2+) is bound at residue His-318. Residue Glu-319 is part of the active site. Zn(2+)-binding residues include His-322 and Asp-333.

This sequence belongs to the peptidase M35 family. Zn(2+) serves as cofactor.

Its subcellular location is the secreted. It carries out the reaction Preferential cleavage of bonds with hydrophobic residues in P1'. Also 3-Asn-|-Gln-4 and 8-Gly-|-Ser-9 bonds in insulin B chain.. Probable secreted metalloprotease that shows high activities on basic nuclear substrates such as histone and protamine. May be involved in virulence. In Arthroderma otae (strain ATCC MYA-4605 / CBS 113480) (Microsporum canis), this protein is Probable neutral protease 2 homolog MCYG_00239.